A 358-amino-acid polypeptide reads, in one-letter code: Bis(monoacylglycero)phosphate synthase CLN5 (358 aa).

The Cytoplasmic portion of the chain corresponds to M1–R23. The helical; Signal-anchor for type II membrane protein transmembrane segment at A24 to G40 threads the bilayer. Residues W41 to L358 lie on the Lumenal side of the membrane. Intrachain disulfides connect C70–C159 and C77–C165. Catalysis depends on H117, which acts as the Proton acceptor. 4 N-linked (GlcNAc...) asparagine glycosylation sites follow: N130, N143, N178, and N203. Catalysis depends on C231, which acts as the Nucleophile; Acyl-thioester intermediate. Residues N255, N271, and N281 are each glycosylated (N-linked (GlcNAc...) asparagine). Residues F304–Y343 are membrane-anchoring. An N-linked (GlcNAc...) asparagine glycan is attached at N352.

This sequence belongs to the CLN5 family. In terms of assembly, multimer. Interacts with SORT1, RAB5A and RAB7A. Interacts with PPT1, TPP1, CLN3, CLN6, CLN8, ATP5F1A and ATP5F1B. In terms of processing, N-glycosylated with both high mannose and complex type sugars. Glycosylation is important for proper folding and trafficking to the lysosomes. The type II membrane signal anchor is proteolytically cleaved to produce a mature form that is transported to the lysosomes (Bis(monoacylglycero)phosphate synthase CLN5, secreted form). Post-translationally, can undergo proteolytic cleavage at the C-terminus, probably by a cysteine protease and may involve the removal of approximately 10-15 residues from the C-terminal end. As to expression, ubiquitous.

It is found in the lysosome. The protein resides in the membrane. It carries out the reaction S-hexadecanoyl-L-cysteinyl-[protein] + H2O = L-cysteinyl-[protein] + hexadecanoate + H(+). It catalyses the reaction 2 1-acyl-sn-glycero-3-phospho-(1'-sn-glycerol) = 1-acyl-sn-glycero-3-phospho-(3'-acyl-sn-1'-glycerol) + sn-glycero-3-phospho-(1'-sn-glycerol). The catalysed reaction is 2 1-(9Z-octadecenoyl)-sn-glycero-3-phospho-(1'-sn-glycerol) = 1-(9Z-octadecenoyl)-sn-glycero-3-phospho-(3'-(9Z-octadecenoyl)-1'-sn-glycerol) + sn-glycero-3-phospho-(1'-sn-glycerol). The enzyme catalyses 2 1-octadecanoyl-sn-glycero-3-phospho-(1'-sn-glycerol) = 1-octadecanoyl-sn-glycero-3-phospho-(3'-octadecanoyl-1'-sn-glycerol) + sn-glycero-3-phospho-(1'-sn-glycerol). It carries out the reaction 2 1-hexadecanoyl-sn-glycero-3-phospho-(1'-sn-glycerol) = 1-hexadecanoyl-sn-glycero-3-phospho-(3'-hexadecanoyl-1'-sn-glycerol) + sn-glycero-3-phospho-(1'-sn-glycerol). It catalyses the reaction 2 1-tetradecanoyl-sn-glycero-3-phospho-(1'-sn-glycerol) = 1-tetradecanoyl-sn-glycero-3-phospho-(3'-tetradecanoyl-1'-sn-glycerol) + sn-glycero-3-phospho-(1'-sn-glycerol). With respect to regulation, anionic phospholipids activate bis(monoacylglycero)phosphate (BMP) synthase activity. Amiodarone, a cationic amphiphilic drug inhibits BMP synthase activity towards liposomal lysophosphatidylglycerol. Palmostatin B inhibits palmitoyl protein thioesterase activity. Catalyzes the synthesis of bis(monoacylglycero)phosphate (BMP) via transacylation of 2 molecules of lysophosphatidylglycerol (LPG). BMP also known as lysobisphosphatidic acid plays a key role in the formation of intraluminal vesicles and in maintaining intracellular cholesterol homeostasis. Can use only LPG as the exclusive lysophospholipid acyl donor for base exchange and displays BMP synthase activity towards various LPGs (LPG 14:0, LPG 16:0, LPG 18:0, LPG 18:1) with a higher preference for longer chain lengths. Plays a role in influencing the retrograde trafficking of lysosomal sorting receptors SORT1 and IGF2R from the endosomes to the trans-Golgi network by controlling the recruitment of retromer complex to the endosomal membrane. Regulates the localization and activation of RAB7A which is required to recruit the retromer complex to the endosomal membrane. Functionally, exhibits palmitoyl protein thioesterase (S-depalmitoylation) activity in vitro and most likely plays a role in protein S-depalmitoylation. The protein is Bis(monoacylglycero)phosphate synthase CLN5 (CLN5) of Homo sapiens (Human).